Here is a 358-residue protein sequence, read N- to C-terminus: DNA polymerase IV (358 aa).

A UmuC domain is found at 4–185 (IIHIDMDCYF…LSLRKIPGVG (182 aa)). Asp8 and Asp103 together coordinate Mg(2+). Residue Glu104 is part of the active site.

Belongs to the DNA polymerase type-Y family. As to quaternary structure, monomer. Mg(2+) is required as a cofactor.

It localises to the cytoplasm. The catalysed reaction is DNA(n) + a 2'-deoxyribonucleoside 5'-triphosphate = DNA(n+1) + diphosphate. In terms of biological role, poorly processive, error-prone DNA polymerase involved in untargeted mutagenesis. Copies undamaged DNA at stalled replication forks, which arise in vivo from mismatched or misaligned primer ends. These misaligned primers can be extended by PolIV. Exhibits no 3'-5' exonuclease (proofreading) activity. May be involved in translesional synthesis, in conjunction with the beta clamp from PolIII. This Shewanella baltica (strain OS195) protein is DNA polymerase IV.